Here is a 274-residue protein sequence, read N- to C-terminus: MERGEGRRGDCSVQVRKKRTRRKSDGPDSIAETIKWWKEQNQKLQEENSSRKAPAKGSKKGCMAGKGGPENSNCAYRGVRQRTWGKWVAEIREPNRGRRLWLGSFPTALEAAHAYDEAARAMYGPTARVNFADNSTDANSGCTSAPSLMMSNGPATIPSDEKDELESPPFIVANGPAVLYQPDKKDVLERVVPEVQDVKTEGSNGLKRVCQERKTMEVCESEGIVLHKEVNISYDYFNVHEVVEMIIVELSADQKTEVHEEYQEGDDGFSLFSY.

Composition is skewed to basic and acidic residues over residues 1–10 (MERGEGRRGD) and 35–50 (KWWK…ENSS). The interval 1-75 (MERGEGRRGD…KGGPENSNCA (75 aa)) is disordered. The AP2/ERF DNA-binding region spans 75–132 (AYRGVRQRTWGKWVAEIREPNRGRRLWLGSFPTALEAAHAYDEAARAMYGPTARVNFA).

Belongs to the AP2/ERF transcription factor family. ERF subfamily.

The protein resides in the nucleus. In terms of biological role, transcriptional activator that binds specifically to the DNA sequence 5'-[AG]CCGAC-3'. Binding to the C-repeat/DRE element mediates high salinity- and dehydration-inducible transcription. The chain is Dehydration-responsive element-binding protein 2A (DREB2A) from Oryza sativa subsp. indica (Rice).